A 323-amino-acid polypeptide reads, in one-letter code: Acetyl esterase (323 aa).

An Involved in the stabilization of the negatively charged intermediate by the formation of the oxyanion hole motif is present at residues 91–93 (HGG). Catalysis depends on residues serine 165, aspartate 262, and histidine 292.

The protein belongs to the 'GDXG' lipolytic enzyme family. Homodimer. Interacts with MalT and MelA.

The protein resides in the cytoplasm. In terms of biological role, displays esterase activity towards short chain fatty esters (acyl chain length of up to 8 carbons). Able to hydrolyze triacetylglycerol (triacetin) and tributyrylglycerol (tributyrin), but not trioleylglycerol (triolein) or cholesterol oleate. Negatively regulates MalT activity by antagonizing maltotriose binding. Inhibits MelA galactosidase activity. This is Acetyl esterase from Salmonella schwarzengrund (strain CVM19633).